A 176-amino-acid chain; its full sequence is CDP-archaeol synthase (176 aa).

A run of 4 helical transmembrane segments spans residues 41–61 (GLIG…FLYN), 73–93 (IITV…KSYF), 114–134 (VVGS…LNWF), and 138–158 (FDSV…SPLL).

This sequence belongs to the CDP-archaeol synthase family. Requires Mg(2+) as cofactor.

The protein localises to the cell membrane. It catalyses the reaction 2,3-bis-O-(geranylgeranyl)-sn-glycerol 1-phosphate + CTP + H(+) = CDP-2,3-bis-O-(geranylgeranyl)-sn-glycerol + diphosphate. It participates in membrane lipid metabolism; glycerophospholipid metabolism. Functionally, catalyzes the formation of CDP-2,3-bis-(O-geranylgeranyl)-sn-glycerol (CDP-archaeol) from 2,3-bis-(O-geranylgeranyl)-sn-glycerol 1-phosphate (DGGGP) and CTP. This reaction is the third ether-bond-formation step in the biosynthesis of archaeal membrane lipids. The sequence is that of CDP-archaeol synthase from Methanocorpusculum labreanum (strain ATCC 43576 / DSM 4855 / Z).